Here is a 254-residue protein sequence, read N- to C-terminus: 3-deoxy-manno-octulosonate cytidylyltransferase (254 aa).

Belongs to the KdsB family.

It localises to the cytoplasm. The catalysed reaction is 3-deoxy-alpha-D-manno-oct-2-ulosonate + CTP = CMP-3-deoxy-beta-D-manno-octulosonate + diphosphate. It functions in the pathway nucleotide-sugar biosynthesis; CMP-3-deoxy-D-manno-octulosonate biosynthesis; CMP-3-deoxy-D-manno-octulosonate from 3-deoxy-D-manno-octulosonate and CTP: step 1/1. Its pathway is bacterial outer membrane biogenesis; lipopolysaccharide biosynthesis. Functionally, activates KDO (a required 8-carbon sugar) for incorporation into bacterial lipopolysaccharide in Gram-negative bacteria. The protein is 3-deoxy-manno-octulosonate cytidylyltransferase of Pseudomonas aeruginosa (strain LESB58).